A 303-amino-acid chain; its full sequence is MIIFSGGTGTPKLLDGLKEILPEEELTVVVNTAEDLWVSGNLISPDLDTVLYLFSDQIDRKRWWGIENDTFGTYERMKELGIEEGLKLGDRDRATHIIRSNIIRDGASLTDSTVKLSSLFGIKANILPMSDDPVSTYIETAEGIMHFQDFWIGKRGEPDVRGVDIRGVSEASISPKVLEAFEKEENILIGPSNPITSIGPIISLPGMRELLKKKKVVAVSPIIGNAPVSGPAGKLMPACGIEVSSMGVAEYYQDFLDVFVFDERDRADEFAFERLGCHASRADTLMTSTEKSKELAEIVVQAF.

7,8-didemethyl-8-hydroxy-5-deazariboflavin is bound by residues Asp-48 and Lys-87.

The protein belongs to the CofD family. As to quaternary structure, homodimer. Mg(2+) serves as cofactor.

The enzyme catalyses (2S)-lactyl-2-diphospho-5'-guanosine + 7,8-didemethyl-8-hydroxy-5-deazariboflavin = oxidized coenzyme F420-0 + GMP + H(+). It participates in cofactor biosynthesis; coenzyme F420 biosynthesis. In terms of biological role, catalyzes the transfer of the 2-phospholactate moiety from (2S)-lactyl-2-diphospho-5'-guanosine to 7,8-didemethyl-8-hydroxy-5-deazariboflavin (FO) with the formation of oxidized coenzyme F420-0 and GMP. In Methanosarcina mazei (strain ATCC BAA-159 / DSM 3647 / Goe1 / Go1 / JCM 11833 / OCM 88) (Methanosarcina frisia), this protein is 2-phospho-L-lactate transferase.